A 95-amino-acid chain; its full sequence is Acylphosphatase (95 aa).

Residues 9–95 (RLTAWVHGRV…KGGLTGFVER (87 aa)) enclose the Acylphosphatase-like domain. Residues R24 and N42 contribute to the active site.

Belongs to the acylphosphatase family.

The enzyme catalyses an acyl phosphate + H2O = a carboxylate + phosphate + H(+). In Saccharopolyspora erythraea (strain ATCC 11635 / DSM 40517 / JCM 4748 / NBRC 13426 / NCIMB 8594 / NRRL 2338), this protein is Acylphosphatase (acyP).